We begin with the raw amino-acid sequence, 139 residues long: MLRTMLKSKIHRATVTCADLHYVGSVTIDADLMDAADLLEGEQVTIVDIDNGARLVTYAITGERGSGVIGINGAAAHLVHPGDLVILIAYATMDDARARTYQPRIVFVDAYNKPIDMGHDPAFVPENAGELLDPRLGVG.

Ser25 functions as the Schiff-base intermediate with substrate; via pyruvic acid in the catalytic mechanism. Ser25 carries the pyruvic acid (Ser) modification. Residue Thr57 participates in substrate binding. Tyr58 functions as the Proton donor in the catalytic mechanism. 73–75 serves as a coordination point for substrate; that stretch reads GAA.

Belongs to the PanD family. As to quaternary structure, heterooctamer of four alpha and four beta subunits. Pyruvate is required as a cofactor. Post-translationally, is synthesized initially as an inactive proenzyme, which is activated by self-cleavage at a specific serine bond to produce a beta-subunit with a hydroxyl group at its C-terminus and an alpha-subunit with a pyruvoyl group at its N-terminus.

Its subcellular location is the cytoplasm. It carries out the reaction L-aspartate + H(+) = beta-alanine + CO2. Its pathway is cofactor biosynthesis; (R)-pantothenate biosynthesis; beta-alanine from L-aspartate: step 1/1. Its function is as follows. Catalyzes the pyruvoyl-dependent decarboxylation of aspartate to produce beta-alanine. This is Aspartate 1-decarboxylase from Mycobacterium bovis (strain BCG / Tokyo 172 / ATCC 35737 / TMC 1019).